Reading from the N-terminus, the 328-residue chain is GMP reductase (328 aa).

Residue Cys176 is the Thioimidate intermediate of the active site. 205-228 (IIADGGIRTHGDIAKSIRFGASMI) is a binding site for NADP(+).

Belongs to the IMPDH/GMPR family. GuaC type 2 subfamily.

The catalysed reaction is IMP + NH4(+) + NADP(+) = GMP + NADPH + 2 H(+). Catalyzes the irreversible NADPH-dependent deamination of GMP to IMP. It functions in the conversion of nucleobase, nucleoside and nucleotide derivatives of G to A nucleotides, and in maintaining the intracellular balance of A and G nucleotides. This chain is GMP reductase, found in Streptococcus pneumoniae serotype 19F (strain G54).